Reading from the N-terminus, the 202-residue chain is LexA repressor (202 aa).

The H-T-H motif DNA-binding region spans 28-48 (RAEIAQRLGFRSPNAAEEHLK). Residues Ser-119 and Lys-156 each act as for autocatalytic cleavage activity in the active site.

The protein belongs to the peptidase S24 family. As to quaternary structure, homodimer.

The catalysed reaction is Hydrolysis of Ala-|-Gly bond in repressor LexA.. Represses a number of genes involved in the response to DNA damage (SOS response), including recA and lexA. Binds to the 16 bp palindromic sequence 5'-CTGTATATATATACAG-3'. In the presence of single-stranded DNA, RecA interacts with LexA causing an autocatalytic cleavage which disrupts the DNA-binding part of LexA, leading to derepression of the SOS regulon and eventually DNA repair. The chain is LexA repressor from Yersinia enterocolitica serotype O:8 / biotype 1B (strain NCTC 13174 / 8081).